Consider the following 507-residue polypeptide: ATP synthase subunit alpha, chloroplastic (507 aa).

170-177 (GDRQTGKT) lines the ATP pocket.

The protein belongs to the ATPase alpha/beta chains family. In terms of assembly, F-type ATPases have 2 components, CF(1) - the catalytic core - and CF(0) - the membrane proton channel. CF(1) has five subunits: alpha(3), beta(3), gamma(1), delta(1), epsilon(1). CF(0) has four main subunits: a, b, b' and c.

Its subcellular location is the plastid. The protein resides in the chloroplast thylakoid membrane. The catalysed reaction is ATP + H2O + 4 H(+)(in) = ADP + phosphate + 5 H(+)(out). Functionally, produces ATP from ADP in the presence of a proton gradient across the membrane. The alpha chain is a regulatory subunit. The protein is ATP synthase subunit alpha, chloroplastic of Populus alba (White poplar).